Here is a 281-residue protein sequence, read N- to C-terminus: Formamidopyrimidine-DNA glycosylase (281 aa).

Proline 2 acts as the Schiff-base intermediate with DNA in catalysis. The active-site Proton donor is the glutamate 3. Lysine 58 acts as the Proton donor; for beta-elimination activity in catalysis. DNA contacts are provided by histidine 100, arginine 119, and arginine 160. The FPG-type zinc finger occupies 245–281 (RVYGREGAPCPTPGCTGTVQRIVQSGRSSFFCPLCQQ). Arginine 271 acts as the Proton donor; for delta-elimination activity in catalysis.

This sequence belongs to the FPG family. In terms of assembly, monomer. The cofactor is Zn(2+).

It carries out the reaction Hydrolysis of DNA containing ring-opened 7-methylguanine residues, releasing 2,6-diamino-4-hydroxy-5-(N-methyl)formamidopyrimidine.. It catalyses the reaction 2'-deoxyribonucleotide-(2'-deoxyribose 5'-phosphate)-2'-deoxyribonucleotide-DNA = a 3'-end 2'-deoxyribonucleotide-(2,3-dehydro-2,3-deoxyribose 5'-phosphate)-DNA + a 5'-end 5'-phospho-2'-deoxyribonucleoside-DNA + H(+). In terms of biological role, involved in base excision repair of DNA damaged by oxidation or by mutagenic agents. Acts as a DNA glycosylase that recognizes and removes damaged bases. Has a preference for oxidized purines, such as 7,8-dihydro-8-oxoguanine (8-oxoG). Has AP (apurinic/apyrimidinic) lyase activity and introduces nicks in the DNA strand. Cleaves the DNA backbone by beta-delta elimination to generate a single-strand break at the site of the removed base with both 3'- and 5'-phosphates. This chain is Formamidopyrimidine-DNA glycosylase, found in Paracoccus denitrificans (strain Pd 1222).